Here is a 97-residue protein sequence, read N- to C-terminus: Apolipoprotein C-II (97 aa).

The N-terminal stretch at 1–22 (MGSRFFLALFLVILMLGNEVQG) is a signal peptide. The interval 63–71 (SMDEKLRDM) is lipid binding. The interval 75 to 97 (SSAAMSTYAGIFTDQLLTLLRGE) is lipoprotein lipase cofactor.

It belongs to the apolipoprotein C2 family. In terms of tissue distribution, adult and fetal liver, intestine and peritoneal macrophages.

It is found in the secreted. In terms of biological role, component of chylomicrons, very low-density lipoproteins (VLDL), low-density lipoproteins (LDL), and high-density lipoproteins (HDL) in plasma. Plays an important role in lipoprotein metabolism as an activator of lipoprotein lipase. The polypeptide is Apolipoprotein C-II (Apoc2) (Mus musculus (Mouse)).